Reading from the N-terminus, the 338-residue chain is Glycerol-3-phosphate dehydrogenase [NAD(P)+] (338 aa).

Positions 14, 15, 35, and 109 each coordinate NADPH. Lys-109, Gly-138, and Thr-140 together coordinate sn-glycerol 3-phosphate. Residue Ala-142 participates in NADPH binding. Positions 194, 247, 257, 258, and 259 each coordinate sn-glycerol 3-phosphate. The active-site Proton acceptor is the Lys-194. Arg-258 contributes to the NADPH binding site. 2 residues coordinate NADPH: Val-282 and Glu-284.

The protein belongs to the NAD-dependent glycerol-3-phosphate dehydrogenase family.

The protein localises to the cytoplasm. The enzyme catalyses sn-glycerol 3-phosphate + NAD(+) = dihydroxyacetone phosphate + NADH + H(+). The catalysed reaction is sn-glycerol 3-phosphate + NADP(+) = dihydroxyacetone phosphate + NADPH + H(+). The protein operates within membrane lipid metabolism; glycerophospholipid metabolism. Catalyzes the reduction of the glycolytic intermediate dihydroxyacetone phosphate (DHAP) to sn-glycerol 3-phosphate (G3P), the key precursor for phospholipid synthesis. In Sodalis glossinidius (strain morsitans), this protein is Glycerol-3-phosphate dehydrogenase [NAD(P)+].